The chain runs to 435 residues: Homoserine dehydrogenase (435 aa).

Positions 13, 14, and 104 each coordinate NADPH. Val-14 provides a ligand contact to NAD(+). NADP(+)-binding residues include Val-14 and Lys-104. Residues Glu-128, Val-131, Gly-133, and Ile-135 each coordinate Na(+). NADP(+)-binding residues include Gly-186 and Glu-189. Residues Glu-189 and Asp-200 each coordinate L-homoserine. Catalysis depends on Lys-204, which acts as the Proton donor. NADPH is bound at residue Gly-301. Gly-301 is a binding site for NAD(+). Gly-301 contacts NADP(+). The 76-residue stretch at 354–429 (YLRVQAKDEP…CVEKPITMIR (76 aa)) folds into the ACT domain.

This sequence belongs to the homoserine dehydrogenase family. As to quaternary structure, homotetramer. A metal cation is required as a cofactor.

It carries out the reaction L-homoserine + NAD(+) = L-aspartate 4-semialdehyde + NADH + H(+). It participates in amino-acid biosynthesis; L-methionine biosynthesis via de novo pathway; L-homoserine from L-aspartate: step 3/3. It functions in the pathway amino-acid biosynthesis; L-threonine biosynthesis; L-threonine from L-aspartate: step 3/5. Its activity is regulated as follows. Neither NaCl nor KCl increase the activity. L-threonine and L-serine do not markedly inhibit the oxidation activity. Catalyzes the conversion of L-aspartate-beta-semialdehyde (L-Asa) to L-homoserine (L-Hse), the third step in the biosynthesis of threonine and methionine from aspartate. Is highly specific for NAD(+), and displays an approximate 479-fold (kcat/Km) preference for NAD(+) over NADP(+). This Neisseria gonorrhoeae (strain ATCC 700825 / FA 1090) protein is Homoserine dehydrogenase.